The following is a 601-amino-acid chain: Casbene synthase, chloroplastic (601 aa).

The transit peptide at 1–56 directs the protein to the chloroplast; it reads MALPSAAMQSNPEKLNLFHRLSSLPTTSLEYGNNRFPFFSSSAKSHFKKPTQACLS. Mg(2+) contacts are provided by D355, D359, N499, S503, and E507. The short motif at 355 to 359 is the DDXXD motif element; the sequence is DDTID.

The protein belongs to the terpene synthase family. Mg(2+) is required as a cofactor.

The protein localises to the plastid. Its subcellular location is the chloroplast. It carries out the reaction (2E,6E,10E)-geranylgeranyl diphosphate = casbene + diphosphate. In terms of biological role, catalyzes the cyclization of geranylgeranyl diphosphate to casbene, a diterpene phytoalexin with antibacterial and antifungal activity. This is Casbene synthase, chloroplastic from Ricinus communis (Castor bean).